We begin with the raw amino-acid sequence, 378 residues long: Quinolinate synthase (378 aa).

Residues His-59 and Ser-80 each coordinate iminosuccinate. Cys-125 contributes to the [4Fe-4S] cluster binding site. Residues 151–153 (YAN) and Ser-168 contribute to the iminosuccinate site. Cys-212 lines the [4Fe-4S] cluster pocket. Iminosuccinate contacts are provided by residues 238-240 (HPE) and Thr-255. Cys-309 contributes to the [4Fe-4S] cluster binding site.

It belongs to the quinolinate synthase family. Type 1 subfamily. Requires [4Fe-4S] cluster as cofactor.

Its subcellular location is the cytoplasm. It carries out the reaction iminosuccinate + dihydroxyacetone phosphate = quinolinate + phosphate + 2 H2O + H(+). It participates in cofactor biosynthesis; NAD(+) biosynthesis; quinolinate from iminoaspartate: step 1/1. In terms of biological role, catalyzes the condensation of iminoaspartate with dihydroxyacetone phosphate to form quinolinate. This chain is Quinolinate synthase, found in Burkholderia thailandensis (strain ATCC 700388 / DSM 13276 / CCUG 48851 / CIP 106301 / E264).